Consider the following 340-residue polypeptide: Aliphatic sulfonates import ATP-binding protein SsuB 1 (340 aa).

The interval 44–72 (THHHARVAAQGHARGDAQPPAGALARDDG) is disordered. Positions 80-299 (VQLRGVGKRY…ARASAGFAAL (220 aa)) constitute an ABC transporter domain. 112 to 119 (GRSGCGKS) contacts ATP.

The protein belongs to the ABC transporter superfamily. Aliphatic sulfonates importer (TC 3.A.1.17.2) family. As to quaternary structure, the complex is composed of two ATP-binding proteins (SsuB), two transmembrane proteins (SsuC) and a solute-binding protein (SsuA).

The protein resides in the cell inner membrane. It carries out the reaction ATP + H2O + aliphatic sulfonate-[sulfonate-binding protein]Side 1 = ADP + phosphate + aliphatic sulfonateSide 2 + [sulfonate-binding protein]Side 1.. In terms of biological role, part of the ABC transporter complex SsuABC involved in aliphatic sulfonates import. Responsible for energy coupling to the transport system. The polypeptide is Aliphatic sulfonates import ATP-binding protein SsuB 1 (Paraburkholderia xenovorans (strain LB400)).